Reading from the N-terminus, the 295-residue chain is Non-selective voltage-gated ion channel VDAC2 (295 aa).

Residues lysine 24 and lysine 32 each coordinate ATP. Lysine 32 bears the N6-acetyllysine; alternate mark. N6-succinyllysine; alternate is present on lysine 32. Residue lysine 32 forms a Glycyl lysine isopeptide (Lys-Gly) (interchain with G-Cter in ubiquitin); alternate linkage. 2 beta stranded membrane passes run 38-47 (LVKLDVKTKS) and 51-59 (VEFSTSGSS). Lysine 65 is covalently cross-linked (Glycyl lysine isopeptide (Lys-Gly) (interchain with G-Cter in ubiquitin)). The beta stranded transmembrane segment at 66–76 (VSGTLETKYKW) threads the bilayer. The residue at position 79 (tyrosine 79) is a Phosphotyrosine. Transmembrane regions (beta stranded) follow at residues 81 to 88 (LTFTEKWN), 92 to 101 (TLGTEIAIED), and 107 to 116 (LKLTFDTTFS). Phosphothreonine is present on threonine 119. An N6-acetyllysine; alternate modification is found at lysine 121. Lysine 121 participates in a covalent cross-link: Glycyl lysine isopeptide (Lys-Gly) (interchain with G-Cter in ubiquitin); alternate. A Glycyl lysine isopeptide (Lys-Gly) (interchain with G-Cter in ubiquitin) cross-link involves residue lysine 122. The next 4 beta stranded transmembrane spans lie at 123–132 (SGKIKSAYKR), 135–142 (INLGCDVD), 149–157 (AIHGSAVFG), and 162–170 (LAGYQMTFD). Lysine 173 participates in a covalent cross-link: Glycyl lysine isopeptide (Lys-Gly) (interchain with G-Cter in ubiquitin). 6 beta stranded membrane-spanning segments follow: residues 175-187 (KLTR…GYRT), 190-197 (FQLHTNVN), 201-210 (EFGGSIYQKV), 214-223 (FDTSVNLAWT), 230-239 (RFGIAAKYQL), and 243-250 (ASISAKVN). The residue at position 237 (tyrosine 237) is a Phosphotyrosine. Serine 252 carries the post-translational modification Phosphoserine. Residues 254–256 (LIG) and 272–276 (SALVD) contribute to the NAD(+) site. The next 2 beta stranded transmembrane spans lie at 254–263 (LIGVGYTQTL) and 266–275 (GVKLTLSALV). Position 278 is an N6-acetyllysine; alternate (lysine 278). Residue lysine 278 forms a Glycyl lysine isopeptide (Lys-Gly) (interchain with G-Cter in ubiquitin); alternate linkage. The beta stranded transmembrane segment at 285–294 (HKLGLALELE) threads the bilayer.

Belongs to the eukaryotic mitochondrial porin family. Monomer, homodimer and higher order oligomers; formation of higher order structures is necessary for scramblase activity. Interacts with ARMC12 in a TBC1D21-dependent manner. Interacts with KLC3. Interacts with SPATA33. Interacts with PPP3CC in a SPATA33-dependent manner. Post-translationally, ubiquitinated by PRKN during mitophagy, leading to its degradation and enhancement of mitophagy. Deubiquitinated by USP30. In terms of tissue distribution, highly expressed in heart, kidney, brain and ascitic tumor with very low levels in liver. Expressed in the head region of epididymal sperm.

The protein resides in the mitochondrion outer membrane. The protein localises to the membrane. It catalyses the reaction chloride(in) = chloride(out). The enzyme catalyses K(+)(in) = K(+)(out). The catalysed reaction is a 1,2-diacyl-sn-glycero-3-phospho-L-serine(in) = a 1,2-diacyl-sn-glycero-3-phospho-L-serine(out). It carries out the reaction a 1,2-diacyl-sn-glycero-3-phosphocholine(in) = a 1,2-diacyl-sn-glycero-3-phosphocholine(out). It catalyses the reaction a 1,2-diacyl-sn-glycero-3-phospho-(1D-myo-inositol)(in) = a 1,2-diacyl-sn-glycero-3-phospho-(1D-myo-inositol)(out). In terms of biological role, non-selective voltage-gated ion channel that mediates the transport of anions and cations through the mitochondrion outer membrane and plasma membrane. The channel adopts an open conformation at zero mV and a closed conformation at both positive and negative potentials. There are two populations of channels; the main that functions in a lower open-state conductance with lower ion selectivity, that switch, in a voltage-dependent manner, from the open to a low-conducting 'closed' state and the other that has a normal ion selectivity in the typical high conductance, 'open' state. Binds various lipids, including the sphingolipid ceramide, the phospholipid phosphatidylcholine, and the sterols cholesterol and oxysterol. Binding of ceramide promotes the mitochondrial outer membrane permeabilization (MOMP) apoptotic pathway. Its function is as follows. Catalyzes the scrambling of phospholipids across the outer mitochondrial membrane; the mechanism is unrelated to channel activity and is capable of translocating both anionic and zwitterionic phospholipids. This chain is Non-selective voltage-gated ion channel VDAC2, found in Rattus norvegicus (Rat).